A 241-amino-acid polypeptide reads, in one-letter code: MADS-box transcription factor 57 (241 aa).

The region spanning 1-61 is the MADS-box domain; sequence MGRGKIVIRR…GRLYEFSSTN (61 aa). The K-box domain occupies 85 to 178; the sequence is IKIWQREAAS…LNVMSQQKLE (94 aa). Residues 216–241 are disordered; it reads LELSQSQQREGECSKTAAPELGLHLP.

In terms of assembly, interacts with TB1. As to expression, expressed in seedling roots and shoots. Highly expressed in young leaves.

Its subcellular location is the nucleus. Transcriptional factor that targets the CArG motif 5'-C(A/T)TTAAAAAG-3' in the promoter of D14. Directly suppresses D14 expression to control the outgrowth of axillary buds. This chain is MADS-box transcription factor 57, found in Oryza sativa subsp. japonica (Rice).